The following is a 159-amino-acid chain: Lipoprotein signal peptidase (159 aa).

Transmembrane regions (helical) follow at residues 4–24 (PYFVSITLFITIAVLILDQVT), 64–84 (MSFFFIVTIVVLGLLVFFYIK), and 88–108 (GNFLMQVAISLLFAGALGNFI). Residues Asp118 and Asp136 contribute to the active site. A helical membrane pass occupies residues 131–151 (IFNGADSSLTIGVILVLIALL).

It belongs to the peptidase A8 family.

The protein resides in the cell membrane. It catalyses the reaction Release of signal peptides from bacterial membrane prolipoproteins. Hydrolyzes -Xaa-Yaa-Zaa-|-(S,diacylglyceryl)Cys-, in which Xaa is hydrophobic (preferably Leu), and Yaa (Ala or Ser) and Zaa (Gly or Ala) have small, neutral side chains.. The protein operates within protein modification; lipoprotein biosynthesis (signal peptide cleavage). This protein specifically catalyzes the removal of signal peptides from prolipoproteins. This is Lipoprotein signal peptidase from Staphylococcus carnosus (strain TM300).